Here is a 318-residue protein sequence, read N- to C-terminus: Aquaporin-1 (318 aa).

Residues 1 to 16 (MVQFGSRANTNMTGLP) are compositionally biased toward polar residues. Residues 1–27 (MVQFGSRANTNMTGLPTEQAVEDRRVG) are disordered. Topologically, residues 1–36 (MVQFGSRANTNMTGLPTEQAVEDRRVGNPKRDRMRN) are cytoplasmic. A helical membrane pass occupies residues 37 to 57 (ALVIVLGEFCGTFMFLLLSFI). The Extracellular segment spans residues 58 to 77 (GAQTALVTNSPSDAGSPLLP). Residues 78–98 (FSLMYIAASFGTALAVNVWIF) traverse the membrane as a helical segment. Residues 99–108 (YRVSGGMFNP) are Cytoplasmic-facing. The NPA 1 motif lies at 107–109 (NPA). A helical membrane pass occupies residues 109–129 (AVTLGLVLVGAVTPIHALLII). Over 130-165 (PTQLVAAITAAGITDALLPGKLLVTNALGNGTSVAQ) the chain is Extracellular. Asn159 is a glycosylation site (N-linked (GlcNAc...) asparagine). The helical transmembrane segment at 166 to 186 (GVFIEMFLTSQLVLTVYFLAV) threads the bilayer. Residues 187–193 (EKHRSTH) are Cytoplasmic-facing. The chain crosses the membrane as a helical span at residues 194 to 214 (LAPIGIGISVFIAHICATNWT). The Extracellular segment spans residues 215 to 236 (GTSINPARSFGPSVVAGFHGYD). The NPA 2 signature appears at 219–221 (NPA). A helical transmembrane segment spans residues 237-257 (WIYYIGPFMGSLLAFGCYKIF). The Cytoplasmic segment spans residues 258 to 318 (KVLEYQTANP…NDSVIDDQMV (61 aa)). Residues 268 to 318 (GQDDDNLDRSGHHHFFGHRKEPMPHTHTDNIEPKDHGVPQRNDSVIDDQMV) form a disordered region. Basic and acidic residues predominate over residues 285–305 (HRKEPMPHTHTDNIEPKDHGV).

Belongs to the MIP/aquaporin (TC 1.A.8) family.

Its subcellular location is the nucleus membrane. It catalyses the reaction H2O(in) = H2O(out). Its function is as follows. Probable water channel involved in responses to changes in environmental conditions and conidiation. Involved in responses to hyperosmotic conditions, oxidative stress and cell wall destabilization. Also required for proper transcriptional activation of genes involved in aurofusarin biosynthesis. Not involved in pathogenicity, but negatively regulates deoxynivalenol (DON) production. The protein is Aquaporin-1 of Gibberella zeae (strain ATCC MYA-4620 / CBS 123657 / FGSC 9075 / NRRL 31084 / PH-1) (Wheat head blight fungus).